The primary structure comprises 550 residues: Chaperonin GroEL (550 aa).

ATP-binding positions include 30–33 (TLGP), Lys51, 87–91 (DGTTT), Gly415, 481–483 (NAA), and Asp497.

Belongs to the chaperonin (HSP60) family. As to quaternary structure, forms a cylinder of 14 subunits composed of two heptameric rings stacked back-to-back. Interacts with the co-chaperonin GroES.

The protein resides in the cytoplasm. It carries out the reaction ATP + H2O + a folded polypeptide = ADP + phosphate + an unfolded polypeptide.. In terms of biological role, together with its co-chaperonin GroES, plays an essential role in assisting protein folding. The GroEL-GroES system forms a nano-cage that allows encapsulation of the non-native substrate proteins and provides a physical environment optimized to promote and accelerate protein folding. The protein is Chaperonin GroEL of Photobacterium profundum (strain SS9).